The following is a 303-amino-acid chain: Methionine import ATP-binding protein MetN (303 aa).

Residues methionine 1 to glycine 222 enclose the ABC transporter domain. Glycine 19–serine 26 is a binding site for ATP.

This sequence belongs to the ABC transporter superfamily. Methionine importer (TC 3.A.1.24) family. In terms of assembly, the complex is composed of two ATP-binding proteins (MetN), two transmembrane proteins (MetI) and a solute-binding protein (MetQ).

The protein resides in the cell inner membrane. It carries out the reaction L-methionine(out) + ATP + H2O = L-methionine(in) + ADP + phosphate + H(+). It catalyses the reaction D-methionine(out) + ATP + H2O = D-methionine(in) + ADP + phosphate + H(+). In terms of biological role, part of the ABC transporter complex MetNIQ involved in methionine import. Responsible for energy coupling to the transport system. This is Methionine import ATP-binding protein MetN from Wolinella succinogenes (strain ATCC 29543 / DSM 1740 / CCUG 13145 / JCM 31913 / LMG 7466 / NCTC 11488 / FDC 602W) (Vibrio succinogenes).